Here is a 31-residue protein sequence, read N- to C-terminus: Cytochrome b6-f complex subunit 6 (31 aa).

Residues 3–23 form a helical membrane-spanning segment; the sequence is ILINYFLLVGFCFALASGLFL.

The protein belongs to the PetL family. In terms of assembly, the 4 large subunits of the cytochrome b6-f complex are cytochrome b6, subunit IV (17 kDa polypeptide, PetD), cytochrome f and the Rieske protein, while the 4 small subunits are PetG, PetL, PetM and PetN. The complex functions as a dimer.

The protein resides in the plastid. Its subcellular location is the chloroplast thylakoid membrane. Its function is as follows. Component of the cytochrome b6-f complex, which mediates electron transfer between photosystem II (PSII) and photosystem I (PSI), cyclic electron flow around PSI, and state transitions. PetL is important for photoautotrophic growth as well as for electron transfer efficiency and stability of the cytochrome b6-f complex. The protein is Cytochrome b6-f complex subunit 6 of Thalassiosira pseudonana (Marine diatom).